The following is a 490-amino-acid chain: Colicin-5 (490 aa).

Polar residues predominate over residues 1-20 (MDKVTDNSPDVESTESTEGS). Disordered stretches follow at residues 1–29 (MDKV…VDTG) and 146–171 (QKAR…EIAR). Residues 146 to 170 (QKAREEAEAAEKALREAERQRDEIA) are compositionally biased toward basic and acidic residues. A helical transmembrane segment spans residues 447–467 (IVALMFSFIVGVPLGFWGIAI).

This sequence belongs to the channel forming colicin family.

The protein resides in the host membrane. Its function is as follows. This colicin is a channel-forming colicin. This class of transmembrane toxins depolarize the cytoplasmic membrane, leading to dissipation of cellular energy. Colicins are polypeptide toxins produced by and active against E.coli and closely related bacteria. The polypeptide is Colicin-5 (cfa) (Escherichia coli).